The chain runs to 731 residues: Lanosterol synthase ERG7 (731 aa).

At Thr-2 the chain carries N-acetylthreonine. One copy of the PFTB 1 repeat lies at 125-167 (RIELIRYIVNTAHPVDGGWGLHSVDKSTVFGTVLNYVILRLLG). The active-site Proton donor is the Asp-456. A PFTB 2 repeat occupies 615-661 (VRKGCDFLVSKQMKDGGWGESMKSSELHSYVDSEKSLVVQTAWALIA).

This sequence belongs to the terpene cyclase/mutase family.

Its subcellular location is the lipid droplet. The protein resides in the endoplasmic reticulum membrane. It catalyses the reaction (S)-2,3-epoxysqualene = lanosterol. Its pathway is terpene metabolism; lanosterol biosynthesis; lanosterol from farnesyl diphosphate: step 3/3. Catalytic activity requires the presence of ERG27. Its function is as follows. Lanosterol synthase; part of the third module of ergosterol biosynthesis pathway that includes the late steps of the pathway. ERG7 catalyzes the cyclization of (S)-2,3 oxidosqualene to lanosterol, a reaction that forms the sterol core. The third module or late pathway involves the ergosterol synthesis itself through consecutive reactions that mainly occur in the endoplasmic reticulum (ER) membrane. Firstly, the squalene synthase ERG9 catalyzes the condensation of 2 farnesyl pyrophosphate moieties to form squalene, which is the precursor of all steroids. Squalene synthase is crucial for balancing the incorporation of farnesyl diphosphate (FPP) into sterol and nonsterol isoprene synthesis. Secondly, the squalene epoxidase ERG1 catalyzes the stereospecific oxidation of squalene to (S)-2,3-epoxysqualene, which is considered to be a rate-limiting enzyme in steroid biosynthesis. Then, the lanosterol synthase ERG7 catalyzes the cyclization of (S)-2,3 oxidosqualene to lanosterol, a reaction that forms the sterol core. In the next steps, lanosterol is transformed to zymosterol through a complex process involving various demethylation, reduction and desaturation reactions. The lanosterol 14-alpha-demethylase ERG11 (also known as CYP51) catalyzes C14-demethylation of lanosterol to produce 4,4'-dimethyl cholesta-8,14,24-triene-3-beta-ol, which is critical for ergosterol biosynthesis. The C-14 reductase ERG24 reduces the C14=C15 double bond of 4,4-dimethyl-cholesta-8,14,24-trienol to produce 4,4-dimethyl-cholesta-8,24-dienol. 4,4-dimethyl-cholesta-8,24-dienol is substrate of the C-4 demethylation complex ERG25-ERG26-ERG27 in which ERG25 catalyzes the three-step monooxygenation required for the demethylation of 4,4-dimethyl and 4alpha-methylsterols, ERG26 catalyzes the oxidative decarboxylation that results in a reduction of the 3-beta-hydroxy group at the C-3 carbon to an oxo group, and ERG27 is responsible for the reduction of the keto group on the C-3. ERG28 has a role as a scaffold to help anchor ERG25, ERG26 and ERG27 to the endoplasmic reticulum and ERG29 regulates the activity of the iron-containing C4-methylsterol oxidase ERG25. Then, the sterol 24-C-methyltransferase ERG6 catalyzes the methyl transfer from S-adenosyl-methionine to the C-24 of zymosterol to form fecosterol. The C-8 sterol isomerase ERG2 catalyzes the reaction which results in unsaturation at C-7 in the B ring of sterols and thus converts fecosterol to episterol. The sterol-C5-desaturase ERG3 then catalyzes the introduction of a C-5 double bond in the B ring to produce 5-dehydroepisterol. The C-22 sterol desaturase ERG5 further converts 5-dehydroepisterol into ergosta-5,7,22,24(28)-tetraen-3beta-ol by forming the C-22(23) double bond in the sterol side chain. Finally, ergosta-5,7,22,24(28)-tetraen-3beta-ol is substrate of the C-24(28) sterol reductase ERG4 to produce ergosterol. The protein is Lanosterol synthase ERG7 of Saccharomyces cerevisiae (strain ATCC 204508 / S288c) (Baker's yeast).